The sequence spans 95 residues: Co-chaperonin GroES (95 aa).

Residues 12-22 (VKPSPAEEKTK) are compositionally biased toward basic and acidic residues. The disordered stretch occupies residues 12 to 38 (VKPSPAEEKTKGGLYIPDSGKEKPQHG).

Belongs to the GroES chaperonin family. As to quaternary structure, heptamer of 7 subunits arranged in a ring. Interacts with the chaperonin GroEL.

Its subcellular location is the cytoplasm. Together with the chaperonin GroEL, plays an essential role in assisting protein folding. The GroEL-GroES system forms a nano-cage that allows encapsulation of the non-native substrate proteins and provides a physical environment optimized to promote and accelerate protein folding. GroES binds to the apical surface of the GroEL ring, thereby capping the opening of the GroEL channel. This chain is Co-chaperonin GroES, found in Chloroherpeton thalassium (strain ATCC 35110 / GB-78).